Here is a 209-residue protein sequence, read N- to C-terminus: Uracil phosphoribosyltransferase (209 aa).

5-phospho-alpha-D-ribose 1-diphosphate-binding positions include arginine 79, arginine 104, and 131-139 (DPMLATGGS). Uracil is bound by residues isoleucine 194 and 199 to 201 (GDA). Residue aspartate 200 participates in 5-phospho-alpha-D-ribose 1-diphosphate binding.

It belongs to the UPRTase family. The cofactor is Mg(2+).

The catalysed reaction is UMP + diphosphate = 5-phospho-alpha-D-ribose 1-diphosphate + uracil. It participates in pyrimidine metabolism; UMP biosynthesis via salvage pathway; UMP from uracil: step 1/1. Its activity is regulated as follows. Allosterically activated by GTP. Catalyzes the conversion of uracil and 5-phospho-alpha-D-ribose 1-diphosphate (PRPP) to UMP and diphosphate. The protein is Uracil phosphoribosyltransferase of Clostridium kluyveri (strain NBRC 12016).